The primary structure comprises 334 residues: Malate dehydrogenase (334 aa).

NAD(+) is bound at residue 17 to 23; sequence GAAGQIG. Arginine 98 and arginine 104 together coordinate substrate. Residues asparagine 111, glutamine 118, and 135–137 contribute to the NAD(+) site; that span reads VGN. The substrate site is built by asparagine 137 and arginine 168. Histidine 193 acts as the Proton acceptor in catalysis.

This sequence belongs to the LDH/MDH superfamily. MDH type 2 family.

It carries out the reaction (S)-malate + NAD(+) = oxaloacetate + NADH + H(+). Functionally, catalyzes the reversible oxidation of malate to oxaloacetate. This is Malate dehydrogenase from Deinococcus geothermalis (strain DSM 11300 / CIP 105573 / AG-3a).